A 403-amino-acid polypeptide reads, in one-letter code: Acetate kinase (403 aa).

Position 7 (asparagine 7) interacts with Mg(2+). Lysine 14 serves as a coordination point for ATP. Arginine 90 is a substrate binding site. Catalysis depends on aspartate 147, which acts as the Proton donor/acceptor. ATP-binding positions include 207-211 (HIGNG), 283-285 (DMR), and 331-335 (GVGEN). Glutamate 386 provides a ligand contact to Mg(2+).

It belongs to the acetokinase family. In terms of assembly, homodimer. It depends on Mg(2+) as a cofactor. The cofactor is Mn(2+).

The protein resides in the cytoplasm. The enzyme catalyses acetate + ATP = acetyl phosphate + ADP. Its pathway is metabolic intermediate biosynthesis; acetyl-CoA biosynthesis; acetyl-CoA from acetate: step 1/2. In terms of biological role, catalyzes the formation of acetyl phosphate from acetate and ATP. Can also catalyze the reverse reaction. Phosphorylates propionate (54%) in addition to acetate (100%). Uses GTP (100%), ITP (163%), UTP (56%), and CTP (21%) as phosphoryl donors in addition to ATP (100%). The polypeptide is Acetate kinase (Thermotoga maritima (strain ATCC 43589 / DSM 3109 / JCM 10099 / NBRC 100826 / MSB8)).